Here is a 332-residue protein sequence, read N- to C-terminus: UBA domain-containing protein Mud1 (332 aa).

The active site involves Asp127. Residues 246 to 298 form a disordered region; sequence GLGIEPASKASASSPNPQSGTRLGTKESVAPNNEGSSNPPSLVNPPTDPGLNS. A compositionally biased stretch (low complexity) spans 251-264; that stretch reads PASKASASSPNPQS. Polar residues predominate over residues 275-286; that stretch reads APNNEGSSNPPS. The UBA domain occupies 291–332; the sequence is PTDPGLNSKIAQLVSMGFDPLEAAQALDAANGDLDVAASFLL.

It belongs to the DDI1 family. Homodimer. Interacts (via UBA domain) with polyubiquitin (polyUb) chains (via Lys-48-linked polyUbs). Has weak binding affinity for monoubiquitin. According to another report, has no affinity for monoubiquitin.

It is found in the cytoplasm. The protein localises to the cell membrane. Recognizes and binds polyubiquitin chains. Acts as a linker between the 19S proteasome and polyubiquitinated proteins via UBA domain interactions with ubiquitin for their subsequent degradation. Aspartic protease. Appears to act as negative regulator of constitutive exocytosis. May act at the level of secretory vesicle docking and fusion as a competitive inhibitor of SNARE assembly. Required for S-phase checkpoint control. In Schizosaccharomyces pombe (strain 972 / ATCC 24843) (Fission yeast), this protein is UBA domain-containing protein Mud1.